Consider the following 651-residue polypeptide: Choline transporter-like protein 1 (651 aa).

Residues 1–25 (MGCCGSTQNSKRDWRPLEEHSCTDI) are Cytoplasmic-facing. Residues 26–46 (PWLLLFILFCVGMGFICGFSI) form a helical membrane-spanning segment. Topologically, residues 47-208 (ATGAASRLVF…RLISGVMTSK (162 aa)) are extracellular. Asn-131 and Asn-176 each carry an N-linked (GlcNAc...) asparagine glycan. A helical membrane pass occupies residues 209-229 (EIIMGLCLLSLVLSMILMVII). Topologically, residues 230-234 (RYISR) are cytoplasmic. A helical membrane pass occupies residues 235-255 (VLVWIITILVVLGSLGGTGVL). At 256–284 (WWLYADNKKSLNENLPPDQLQVSKDNLQA) the chain is on the extracellular side. A helical membrane pass occupies residues 285–305 (LLVYAIAATVFTVILLLMMLI). Residues 306–311 (MRKRVA) are Cytoplasmic-facing. Residues 312–332 (LTIALFNVAGKVFIHLPLLVF) form a helical membrane-spanning segment. Topologically, residues 333-334 (QP) are extracellular. A helical membrane pass occupies residues 335–355 (FWTFFALLLFWVYWVMVLLFL). Over 356–376 (GTAGDPFTNEQGFVEFRINGP) the chain is Cytoplasmic. A helical transmembrane segment spans residues 377 to 397 (LQYMWWYHLVGLIWISEFILA). Residues 398-438 (CQQMTIAGAVVTYYFTRNKNDLPFTPILASVNRLIRYHLGT) lie on the Extracellular side of the membrane. Residues 439–459 (VAKGAFIITLVKIPRMILMYI) traverse the membrane as a helical segment. The Cytoplasmic segment spans residues 460-533 (HSQLKGKENA…RVAAINTVGD (74 aa)). A helical membrane pass occupies residues 534 to 554 (FMLFLGKILIVSCTGLAGIML). The Extracellular segment spans residues 555–562 (LNYQRDYT). Residues 563-583 (VWVLPLIIVCLFAFLVAHCFL) form a helical membrane-spanning segment. Residues 584-651 (SIYEMVVDVL…KPMASGTSTA (68 aa)) are Cytoplasmic-facing. The tract at residues 629–651 (LKEPGSTAEGRELKPMASGTSTA) is disordered.

It belongs to the CTL (choline transporter-like) family.

The protein resides in the cell membrane. It is found in the mitochondrion outer membrane. The catalysed reaction is choline(out) + n H(+)(in) = choline(in) + n H(+)(out). It catalyses the reaction ethanolamine(out) + n H(+)(in) = ethanolamine(in) + n H(+)(out). Choline/H+ antiporter. Also acts as a high-affinity ethanolamine/H+ antiporter, regulating the supply of extracellular ethanolamine (Etn) for the CDP-Etn pathway, redistribute intracellular Etn and balance the CDP-Cho and CDP-Etn arms of the Kennedy pathway. Involved in membrane synthesis and myelin production. The protein is Choline transporter-like protein 1 (slc44a1) of Xenopus laevis (African clawed frog).